We begin with the raw amino-acid sequence, 160 residues long: Cytochrome c-type biogenesis protein CcmE (160 aa).

The Cytoplasmic portion of the chain corresponds to 1-8; the sequence is MNPRRKKR. Residues 9–29 traverse the membrane as a helical; Signal-anchor for type II membrane protein segment; sequence LGVVLAILFGLSATIGLIIYA. Residues 30-160 lie on the Periplasmic side of the membrane; sequence LNQNMDLFYT…SQEQKQGSDQ (131 aa). Residues His128 and Tyr132 each coordinate heme.

It belongs to the CcmE/CycJ family.

The protein resides in the cell inner membrane. Functionally, heme chaperone required for the biogenesis of c-type cytochromes. Transiently binds heme delivered by CcmC and transfers the heme to apo-cytochromes in a process facilitated by CcmF and CcmH. The chain is Cytochrome c-type biogenesis protein CcmE from Vibrio cholerae serotype O1 (strain ATCC 39541 / Classical Ogawa 395 / O395).